The following is a 131-amino-acid chain: Small ribosomal subunit protein uS8 (131 aa).

It belongs to the universal ribosomal protein uS8 family. In terms of assembly, part of the 30S ribosomal subunit. Contacts proteins S5 and S12.

In terms of biological role, one of the primary rRNA binding proteins, it binds directly to 16S rRNA central domain where it helps coordinate assembly of the platform of the 30S subunit. The protein is Small ribosomal subunit protein uS8 of Campylobacter jejuni subsp. jejuni serotype O:23/36 (strain 81-176).